Consider the following 476-residue polypeptide: tRNA(Ile)-lysidine synthase (476 aa).

30-35 is an ATP binding site; the sequence is SGGPDS.

The protein belongs to the tRNA(Ile)-lysidine synthase family.

Its subcellular location is the cytoplasm. It carries out the reaction cytidine(34) in tRNA(Ile2) + L-lysine + ATP = lysidine(34) in tRNA(Ile2) + AMP + diphosphate + H(+). Ligates lysine onto the cytidine present at position 34 of the AUA codon-specific tRNA(Ile) that contains the anticodon CAU, in an ATP-dependent manner. Cytidine is converted to lysidine, thus changing the amino acid specificity of the tRNA from methionine to isoleucine. This chain is tRNA(Ile)-lysidine synthase, found in Bacillus thuringiensis subsp. konkukian (strain 97-27).